The chain runs to 65 residues: Large ribosomal subunit protein uL29 (65 aa).

The protein belongs to the universal ribosomal protein uL29 family.

The polypeptide is Large ribosomal subunit protein uL29 (Lactobacillus helveticus (strain DPC 4571)).